The following is a 439-amino-acid chain: COBRA-like protein 7 (439 aa).

The N-terminal stretch at 1 to 22 (MDVDQLILFVFVCCLSSRFADA) is a signal peptide. N-linked (GlcNAc...) asparagine glycans are attached at residues Asn-138, Asn-181, Asn-186, Asn-232, Asn-312, and Asn-346. Asn-412 carries the GPI-anchor amidated asparagine lipid modification. The propeptide at 413-439 (GGPDSRVSAAQLIASSCLLLPFIFLIM) is removed in mature form.

It belongs to the COBRA family.

It localises to the cell membrane. In terms of biological role, involved in determining the orientation of cell expansion, probably by playing an important role in cellulose deposition. May act by recruiting cellulose synthesizing complexes to discrete positions on the cell surface. This is COBRA-like protein 7 (BC1LP1) from Oryza sativa subsp. japonica (Rice).